A 382-amino-acid polypeptide reads, in one-letter code: MSDKYYRSAYMNVDLNAVASNFKVFSTLHPNKTVMAVVKANAYGLGSVKVARHLMENGATFFAVATLDEAIELRMHGITAKILVLGVLPAKDIDKAIQHRVALTVPSKQWLKEAIKNISGEQEKKLWLHIKLDTGMGRLGIKDTNTYQEVIEIIQQYEQLVFEGVFTHFACADEPGDMTTEQYQRFKDMVNEAIKPEYIHCQNSAGSLLMDCQFCNAIRPGISLYGYYPSEYVQQKVKVHLKPSVQLIANVVQTKTLQAGESVSYGATYTATDPTTIALLPIGYADGYLRIMQGSFVNVNGHQCEVIGRVCMDQTIVKVPDQVKAGDSVILIDNHRESPQSVEVVAEKQHTINYEVLCNLSRRLPRIYHDGDQRFVTNELLK.

Residue lysine 39 is the Proton acceptor; specific for D-alanine of the active site. At lysine 39 the chain carries N6-(pyridoxal phosphate)lysine. A substrate-binding site is contributed by arginine 138. Tyrosine 265 (proton acceptor; specific for L-alanine) is an active-site residue. Methionine 312 is a substrate binding site.

This sequence belongs to the alanine racemase family. Pyridoxal 5'-phosphate serves as cofactor.

The catalysed reaction is L-alanine = D-alanine. The protein operates within amino-acid biosynthesis; D-alanine biosynthesis; D-alanine from L-alanine: step 1/1. Functionally, catalyzes the interconversion of L-alanine and D-alanine. May also act on other amino acids. The polypeptide is Alanine racemase 1 (alr1) (Staphylococcus aureus (strain N315)).